We begin with the raw amino-acid sequence, 550 residues long: Hydroxylamine reductase (550 aa).

Cys3, Cys6, Cys18, and Cys25 together coordinate [2Fe-2S] cluster. Hybrid [4Fe-2O-2S] cluster contacts are provided by His249, Glu273, Cys317, Cys405, Cys433, Cys458, Glu492, and Lys494. Cys405 carries the cysteine persulfide modification.

It belongs to the HCP family. The cofactor is [2Fe-2S] cluster. Hybrid [4Fe-2O-2S] cluster serves as cofactor.

The protein resides in the cytoplasm. The catalysed reaction is A + NH4(+) + H2O = hydroxylamine + AH2 + H(+). Inhibited by oxygen. Activated by cyanide except in the prolonged presence of excess cyanide, where the enzyme is inactivated. Functionally, catalyzes the reduction of hydroxylamine to form NH(3) and H(2)O. Is also able to reduce hydroxylamine analogs such as methylhydroxylamine and hydroxyquinone. Might have a role as a scavenger of potentially toxic by-products of nitrate metabolism. This chain is Hydroxylamine reductase, found in Escherichia coli (strain K12).